Here is a 316-residue protein sequence, read N- to C-terminus: Ribose-phosphate pyrophosphokinase (316 aa).

Residues 39–41 (DGE) and 98–99 (RQ) each bind ATP. Mg(2+) contacts are provided by H133 and D172. The active site involves K195. Residues R197, D221, and 225–229 (DTANT) contribute to the D-ribose 5-phosphate site.

Belongs to the ribose-phosphate pyrophosphokinase family. Class I subfamily. As to quaternary structure, homohexamer. It depends on Mg(2+) as a cofactor.

It is found in the cytoplasm. The enzyme catalyses D-ribose 5-phosphate + ATP = 5-phospho-alpha-D-ribose 1-diphosphate + AMP + H(+). It functions in the pathway metabolic intermediate biosynthesis; 5-phospho-alpha-D-ribose 1-diphosphate biosynthesis; 5-phospho-alpha-D-ribose 1-diphosphate from D-ribose 5-phosphate (route I): step 1/1. Functionally, involved in the biosynthesis of the central metabolite phospho-alpha-D-ribosyl-1-pyrophosphate (PRPP) via the transfer of pyrophosphoryl group from ATP to 1-hydroxyl of ribose-5-phosphate (Rib-5-P). The chain is Ribose-phosphate pyrophosphokinase from Nitrosomonas europaea (strain ATCC 19718 / CIP 103999 / KCTC 2705 / NBRC 14298).